Consider the following 761-residue polypeptide: Proton-coupled zinc antiporter SLC30A5 (761 aa).

M1 carries the N-acetylmethionine modification. The Cytoplasmic segment spans residues 1–29 (MEEKYGGDARPGPGGGLGPVDVPSARLTR). A helical membrane pass occupies residues 30 to 46 (YILLLCLTKCLKAVGLF). At 47 to 54 (ESYDLLKA) the chain is on the lumenal side. Residues 55-75 (VHIVQFIFILKLGTAFFMVLF) form a helical membrane-spanning segment. Topologically, residues 76–96 (QKPFSSGKPITKHQWIKIFKH) are cytoplasmic. The chain crosses the membrane as a helical span at residues 97-117 (AVAGCIISLLWFFGLTLCGPL). R118 is a topological domain (lumenal). Residues 119 to 139 (TLLLFEHSDIVVISLLSVLFT) form a helical membrane-spanning segment. At 140-150 (SSGGGPAKTRG) the chain is on the cytoplasmic side. The chain crosses the membrane as a helical span at residues 151–171 (AAFFIIAVICLLLFDNDDLMA). Over 172–191 (KMAEHPEGHHDSALTHMLYT) the chain is Lumenal. Residues 192–212 (AIAFLGVADHKGGVLLLVLAL) traverse the membrane as a helical segment. Over 213-236 (CCKVGFHTASRKLSIDVGGAKRLQ) the chain is Cytoplasmic. The helical transmembrane segment at 237-257 (ALSQLVSVFLLCPWVIVLSVT) threads the bilayer. Residues 258–264 (TESKVES) lie on the Lumenal side of the membrane. A helical transmembrane segment spans residues 265–285 (WFSLIMPFTTVIFFVMILDFY). At 286-301 (MDSVCSVKMDVSKCAR) the chain is on the cytoplasmic side. Residues 302-322 (YGSFPIFISALLFGNFWTHPI) traverse the membrane as a helical segment. Over 323-340 (TDQLRAMNRAAHQESTEH) the chain is Lumenal. Residues 341–361 (VLSGGVVVSAVFFILSANILS) traverse the membrane as a helical segment. Residues 362–416 (SPSKRGQKGTLIGYSPEGTPLYHFMGDAFQHSSQSVPRFIKDSLKQVLEESDSRQ) lie on the Cytoplasmic side of the membrane. A helical transmembrane segment spans residues 417–437 (IFYFLCLNLLFTFVELFYGVL). The segment at 418–636 (FYFLCLNLLF…VLIFLSVIPL (219 aa)) is mediates homodimerization with SLC30A6. Over 438-446 (TNSLGLISD) the chain is Lumenal. The chain crosses the membrane as a helical span at residues 447–467 (GFHMLFDCSALVMGLFAALMS). 2 residues coordinate Zn(2+): H449 and D453. Over 468–481 (RWKATRIFSYGYGR) the chain is Cytoplasmic. The helical transmembrane segment at 482–502 (IEILSGFINGLFLIVIAFFVF) threads the bilayer. Residues 503-518 (MESVARLIDPPELDTN) are Lumenal-facing. A helical membrane pass occupies residues 519-539 (MLTPVSVGGLIVNLIGICAFS). The interval 540–574 (HAHSHGHGASQGNCHSDHGHSHHAHGHGHDHGHSH) is his-rich loop; required for zinc transport. Topologically, residues 540 to 588 (HAHSHGHGASQGNCHSDHGHSHHAHGHGHDHGHSHGFTGGGMNANMRGV) are cytoplasmic. Residues 549–576 (SQGNCHSDHGHSHHAHGHGHDHGHSHGF) form a disordered region. Residues 589-609 (FLHVLADTLGSIGVIVSTVLI) form a helical membrane-spanning segment. Zn(2+) contacts are provided by H591 and D595. Residues 610-613 (EQFG) are Lumenal-facing. Residues 614-634 (WFIADPLCSLFIAVLIFLSVI) traverse the membrane as a helical segment. At 635–761 (PLIKDACQVL…KYCKDGTYIM (127 aa)) the chain is on the cytoplasmic side.

The protein belongs to the cation diffusion facilitator (CDF) transporter (TC 2.A.4) family. SLC30A subfamily. In terms of assembly, heterodimer with SLC30A6/ZNT6; form a functional zinc ion transmembrane transporter. In terms of processing, could homodimerize through the formation of dityrosine bonds upon oxidative stress. Ubiquitously expressed.

The protein localises to the golgi apparatus. It is found in the golgi stack membrane. Its subcellular location is the cytoplasmic vesicle. The protein resides in the COPII-coated vesicle membrane. It localises to the secretory vesicle membrane. The protein localises to the trans-Golgi network membrane. The enzyme catalyses Zn(2+)(in) + 2 H(+)(out) = Zn(2+)(out) + 2 H(+)(in). Its function is as follows. Together with SLC30A6 forms a functional proton-coupled zinc ion antiporter mediating zinc entry into the lumen of organelles along the secretory pathway. By contributing to zinc ion homeostasis within the early secretory pathway, regulates the activation and folding of enzymes like alkaline phosphatases and enzymes involved in phosphatidylinositol glycan anchor biosynthesis. Through the transport of zinc into secretory granules of pancreatic beta-cells, plays an important role in the storage and secretion of insulin. The polypeptide is Proton-coupled zinc antiporter SLC30A5 (Mus musculus (Mouse)).